A 298-amino-acid polypeptide reads, in one-letter code: Ribosomal RNA small subunit methyltransferase H (298 aa).

Residues 37-39 (GGH), D57, L91, D105, and Q112 contribute to the S-adenosyl-L-methionine site.

Belongs to the methyltransferase superfamily. RsmH family.

Its subcellular location is the cytoplasm. The catalysed reaction is cytidine(1402) in 16S rRNA + S-adenosyl-L-methionine = N(4)-methylcytidine(1402) in 16S rRNA + S-adenosyl-L-homocysteine + H(+). In terms of biological role, specifically methylates the N4 position of cytidine in position 1402 (C1402) of 16S rRNA. The sequence is that of Ribosomal RNA small subunit methyltransferase H from Kosmotoga olearia (strain ATCC BAA-1733 / DSM 21960 / TBF 19.5.1).